The following is a 355-amino-acid chain: MIGRLNLITKSNLFKNVNNLNNKNYYSTCLVIAEHDNNQLLNSTLNTITAASKLGVTNISVLVAGSKCGPVADSVSKVSGVTNVVCVDHPTLEHSLAETITPIIVKLQSSSSKEGDEITHIFTPASNFGKNFLPRVAALLNVSQISEITKVKDAETFQRPIYAGNAIATVKSTDKCKVGTVRTTAFDKAPTSGGSAKVVSANDWAVPLIEKAISETNIKWESSEVKKSERPELTSARVVVSGGRGMKNGENFKMLEELADTLGGAVGASRAAVDSGFVSNDLQVGQTGKIVAPELYIAVGISGAIQHLAGMKDSKVIVAINKDPEAPIFQVADVGLVGDLFNEVPKLTESIKKSK.

295 to 323 is an FAD binding site; sequence LYIAVGISGAIQHLAGMKDSKVIVAINKD.

Belongs to the ETF alpha-subunit/FixB family. In terms of assembly, heterodimer of an alpha and a beta subunit. It depends on FAD as a cofactor.

The protein resides in the mitochondrion matrix. In terms of biological role, the electron transfer flavoprotein serves as a specific electron acceptor for several dehydrogenases, including five acyl-CoA dehydrogenases, glutaryl-CoA and sarcosine dehydrogenase. It transfers the electrons to the main mitochondrial respiratory chain via ETF-ubiquinone oxidoreductase (ETF dehydrogenase). The chain is Electron transfer flavoprotein subunit alpha, mitochondrial (etfa) from Dictyostelium discoideum (Social amoeba).